A 430-amino-acid chain; its full sequence is Gamma-glutamyl phosphate reductase (430 aa).

The protein belongs to the gamma-glutamyl phosphate reductase family.

The protein localises to the cytoplasm. The enzyme catalyses L-glutamate 5-semialdehyde + phosphate + NADP(+) = L-glutamyl 5-phosphate + NADPH + H(+). Its pathway is amino-acid biosynthesis; L-proline biosynthesis; L-glutamate 5-semialdehyde from L-glutamate: step 2/2. Functionally, catalyzes the NADPH-dependent reduction of L-glutamate 5-phosphate into L-glutamate 5-semialdehyde and phosphate. The product spontaneously undergoes cyclization to form 1-pyrroline-5-carboxylate. The protein is Gamma-glutamyl phosphate reductase of Rhodopseudomonas palustris (strain BisB5).